We begin with the raw amino-acid sequence, 207 residues long: FMN-dependent NADH:quinone oxidoreductase 1 (207 aa).

FMN contacts are provided by residues Ser-9, 15–17 (SIS), and 139–142 (TRGG).

The protein belongs to the azoreductase type 1 family. As to quaternary structure, homodimer. It depends on FMN as a cofactor.

The enzyme catalyses 2 a quinone + NADH + H(+) = 2 a 1,4-benzosemiquinone + NAD(+). The catalysed reaction is N,N-dimethyl-1,4-phenylenediamine + anthranilate + 2 NAD(+) = 2-(4-dimethylaminophenyl)diazenylbenzoate + 2 NADH + 2 H(+). Quinone reductase that provides resistance to thiol-specific stress caused by electrophilic quinones. Its function is as follows. Also exhibits azoreductase activity. Catalyzes the reductive cleavage of the azo bond in aromatic azo compounds to the corresponding amines. The chain is FMN-dependent NADH:quinone oxidoreductase 1 from Trichormus variabilis (strain ATCC 29413 / PCC 7937) (Anabaena variabilis).